Here is a 123-residue protein sequence, read N- to C-terminus: Large ribosomal subunit protein uL18 (123 aa).

The protein belongs to the universal ribosomal protein uL18 family. As to quaternary structure, part of the 50S ribosomal subunit; part of the 5S rRNA/L5/L18/L25 subcomplex. Contacts the 5S and 23S rRNAs.

In terms of biological role, this is one of the proteins that bind and probably mediate the attachment of the 5S RNA into the large ribosomal subunit, where it forms part of the central protuberance. This is Large ribosomal subunit protein uL18 from Chlamydia trachomatis serovar L2 (strain ATCC VR-902B / DSM 19102 / 434/Bu).